Here is a 229-residue protein sequence, read N- to C-terminus: Probable coenzyme A transferase subunit alpha (229 aa).

26 to 32 is a binding site for CoA; it reads GGFGGVG.

The protein belongs to the 3-oxoacid CoA-transferase subunit A family. As to quaternary structure, heterodimer of a subunit alpha and a subunit beta.

This is Probable coenzyme A transferase subunit alpha (yodS) from Bacillus subtilis (strain 168).